Consider the following 232-residue polypeptide: TIR domain-containing adapter molecule 2 (232 aa).

Positions 1 to 10 are enriched in basic and acidic residues; the sequence is MGIGKSKMDP. The interval 1–71 is disordered; sequence MGIGKSKMDP…VEERPEEDTE (71 aa). Residue glycine 2 is the site of N-myristoyl glycine attachment. Residues 19 to 29 show a composition bias toward polar residues; sequence KSQSVDTSQSH. Basic and acidic residues predominate over residues 30-42; it reads HMSDSKQSEEISL. Positions 55–71 are enriched in acidic residues; that stretch reads PAEEQEGVEERPEEDTE. In terms of domain architecture, TIR spans 70 to 226; the sequence is TEEEVFLKFV…AIWKETRNTV (157 aa). A Phosphotyrosine modification is found at tyrosine 164.

Homodimer. Interacts with TLR4, TICAM1, IRF3 and IRF7 in response to LPS. Interacts with IL1R1, IL1RAP, IRAK2, IRAK3 and TRAF6. Interacts with protein kinase-inactive mutants of IRAK1 and IRAK4. Isoform 1 interacts with isoform 2; the interaction occurs in late endosomes and disrupts the interaction between isoform 1 and TICAM1. Interacts with MYD88; the interaction decreases after IL-18 stimulation in a time-dependent manner. Interacts with IL18R1 and IL18RAP. Interacts with TLR2. Interacts with RAB11FIP2. Post-translationally, myristoylated. Required for membrane association which is critical for its ability to initiate efficient signaling. Phosphorylated by PRKCE in response to LPS. Phosphorylation is essential for its function. It is depleted from the membrane upon phosphorylation. Tyrosine phosphorylation is inhibited by phosphatase PTPN4.

It is found in the cytoplasm. It localises to the golgi apparatus. The protein localises to the cell membrane. The protein resides in the endoplasmic reticulum. Its subcellular location is the early endosome. It is found in the late endosome. It localises to the cell projection. The protein localises to the phagocytic cup. Functionally, functions as a sorting adapter in different signaling pathways to facilitate downstream signaling leading to type I interferon induction. In TLR4 signaling, physically bridges TLR4 and TICAM1 and functionally transmits signal to TICAM1 in early endosomes after endocytosis of TLR4. In TLR2 signaling, physically bridges TLR2 and MYD88 and is required for the TLR2-dependent movement of MYD88 to endosomes following ligand engagement. Involved in IL-18 signaling and is proposed to function as a sorting adapter for MYD88 in IL-18 signaling during adaptive immune response. Forms a complex with RAB11FIP2 that is recruited to the phagosomes to promote the activation of the actin-regulatory GTPases RAC1 and CDC42 and subsequent phagocytosis of Gram-negative bacteria. This chain is TIR domain-containing adapter molecule 2 (TICAM2), found in Bos taurus (Bovine).